A 302-amino-acid chain; its full sequence is Pyridoxal 5'-phosphate synthase subunit PdxS (302 aa).

Aspartate 32 is a D-ribose 5-phosphate binding site. The Schiff-base intermediate with D-ribose 5-phosphate role is filled by lysine 89. Glycine 161 provides a ligand contact to D-ribose 5-phosphate. D-glyceraldehyde 3-phosphate is bound at residue arginine 173. D-ribose 5-phosphate contacts are provided by residues glycine 222 and 243 to 244; that span reads GS. The tract at residues 276 to 302 is disordered; sequence ASNIGEGMQGDPNADLPEDERMQDRGN.

It belongs to the PdxS/SNZ family. As to quaternary structure, in the presence of PdxT, forms a dodecamer of heterodimers.

It catalyses the reaction aldehydo-D-ribose 5-phosphate + D-glyceraldehyde 3-phosphate + L-glutamine = pyridoxal 5'-phosphate + L-glutamate + phosphate + 3 H2O + H(+). The protein operates within cofactor biosynthesis; pyridoxal 5'-phosphate biosynthesis. In terms of biological role, catalyzes the formation of pyridoxal 5'-phosphate from ribose 5-phosphate (RBP), glyceraldehyde 3-phosphate (G3P) and ammonia. The ammonia is provided by the PdxT subunit. Can also use ribulose 5-phosphate and dihydroxyacetone phosphate as substrates, resulting from enzyme-catalyzed isomerization of RBP and G3P, respectively. This is Pyridoxal 5'-phosphate synthase subunit PdxS from Halobacterium salinarum (strain ATCC 29341 / DSM 671 / R1).